The sequence spans 97 residues: uncharacterized protein (97 aa).

Positions 27-50 (IGESEDKTNSRGQPATMKEDEVED) are disordered.

This is an uncharacterized protein from Caldicellulosiruptor saccharolyticus (Caldocellum saccharolyticum).